The chain runs to 160 residues: uncharacterized protein (160 aa).

A Cupin type-2 domain is found at 37–110; sequence LMSLKPKEDI…TDYLKLYTIY (74 aa).

Its subcellular location is the virion. This is an uncharacterized protein from Acanthamoeba polyphaga mimivirus (APMV).